Here is a 469-residue protein sequence, read N- to C-terminus: Glutamate--tRNA ligase 2 (469 aa).

The 'HIGH' region signature appears at 8–18; the sequence is PSPTGFLHVGG. The short motif at 250–254 is the 'KMSKS' region element; that stretch reads KLSKR. Lys253 is a binding site for ATP.

This sequence belongs to the class-I aminoacyl-tRNA synthetase family. Glutamate--tRNA ligase type 1 subfamily. In terms of assembly, monomer.

The protein resides in the cytoplasm. It catalyses the reaction tRNA(Glu) + L-glutamate + ATP = L-glutamyl-tRNA(Glu) + AMP + diphosphate. Its function is as follows. Catalyzes the attachment of glutamate to tRNA(Glu) in a two-step reaction: glutamate is first activated by ATP to form Glu-AMP and then transferred to the acceptor end of tRNA(Glu). This chain is Glutamate--tRNA ligase 2, found in Thermotoga sp. (strain RQ2).